The primary structure comprises 246 residues: Ribonuclease 3 (246 aa).

The RNase III domain occupies 30–152; it reads ISWIEKNLGH…MIGAIFLESG (123 aa). Glu-65 contacts Mg(2+). The active site involves Asp-69. Residues Asp-138 and Glu-141 each coordinate Mg(2+). Glu-141 is a catalytic residue. The DRBM domain maps to 177–246; it reads HPKSALQEWA…AQALLDILAQ (70 aa).

This sequence belongs to the ribonuclease III family. Homodimer. Requires Mg(2+) as cofactor.

It localises to the cytoplasm. The catalysed reaction is Endonucleolytic cleavage to 5'-phosphomonoester.. Functionally, digests double-stranded RNA. Involved in the processing of primary rRNA transcript to yield the immediate precursors to the large and small rRNAs (23S and 16S). Processes some mRNAs, and tRNAs when they are encoded in the rRNA operon. Processes pre-crRNA and tracrRNA of type II CRISPR loci if present in the organism. The polypeptide is Ribonuclease 3 (Zymomonas mobilis subsp. mobilis (strain ATCC 31821 / ZM4 / CP4)).